We begin with the raw amino-acid sequence, 129 residues long: uncharacterized protein (129 aa).

Over residues 86-96 the composition is skewed to acidic residues; the sequence is NDGFSSDDEPE. A disordered region spans residues 86–116; sequence NDGFSSDDEPEEHVILTEDNQGEPSETPQAT. Over residues 103–116 the composition is skewed to polar residues; sequence EDNQGEPSETPQAT.

The protein belongs to the asfivirus D129L family.

This is an uncharacterized protein from African swine fever virus (strain Badajoz 1971 Vero-adapted) (Ba71V).